We begin with the raw amino-acid sequence, 122 residues long: Large ribosomal subunit protein uL14 (122 aa).

This sequence belongs to the universal ribosomal protein uL14 family. As to quaternary structure, part of the 50S ribosomal subunit. Forms a cluster with proteins L3 and L19. In the 70S ribosome, L14 and L19 interact and together make contacts with the 16S rRNA in bridges B5 and B8.

Functionally, binds to 23S rRNA. Forms part of two intersubunit bridges in the 70S ribosome. The protein is Large ribosomal subunit protein uL14 of Brachyspira hyodysenteriae (strain ATCC 49526 / WA1).